A 272-amino-acid chain; its full sequence is Small ribosomal subunit protein uS2 (272 aa).

Residues 224-233 are compositionally biased toward basic and acidic residues; it reads EGKKAREERQ. A disordered region spans residues 224–272; that stretch reads EGKKAREERQLAAAKDAAGDAKPEAEEAPAAAEAEEAPAAEAEEAPAAE. The segment covering 256 to 272 has biased composition (acidic residues); sequence EAEEAPAAEAEEAPAAE.

Belongs to the universal ribosomal protein uS2 family.

The protein is Small ribosomal subunit protein uS2 of Corynebacterium glutamicum (strain ATCC 13032 / DSM 20300 / JCM 1318 / BCRC 11384 / CCUG 27702 / LMG 3730 / NBRC 12168 / NCIMB 10025 / NRRL B-2784 / 534).